The sequence spans 228 residues: ATP-dependent dethiobiotin synthetase BioD 1 (228 aa).

An ATP-binding site is contributed by 13–18 (EVGKTV). T17 lines the Mg(2+) pocket. K38 is an active-site residue. Substrate is bound at residue S42. Residues D55, 116 to 119 (EGAG), 176 to 177 (ND), and 205 to 207 (PWL) contribute to the ATP site. Mg(2+) is bound by residues D55 and E116.

The protein belongs to the dethiobiotin synthetase family. In terms of assembly, homodimer. The cofactor is Mg(2+).

It localises to the cytoplasm. The enzyme catalyses (7R,8S)-7,8-diammoniononanoate + CO2 + ATP = (4R,5S)-dethiobiotin + ADP + phosphate + 3 H(+). It participates in cofactor biosynthesis; biotin biosynthesis; biotin from 7,8-diaminononanoate: step 1/2. Its function is as follows. Catalyzes a mechanistically unusual reaction, the ATP-dependent insertion of CO2 between the N7 and N8 nitrogen atoms of 7,8-diaminopelargonic acid (DAPA, also called 7,8-diammoniononanoate) to form a ureido ring. This is ATP-dependent dethiobiotin synthetase BioD 1 from Salmonella typhi.